The following is a 78-amino-acid chain: Translation initiation factor IF-1 (78 aa).

Residues 4–78 (KFNNQAKQDK…LKLGRIIGRK (75 aa)) enclose the S1-like domain.

Belongs to the IF-1 family. As to quaternary structure, component of the 30S ribosomal translation pre-initiation complex which assembles on the 30S ribosome in the order IF-2 and IF-3, IF-1 and N-formylmethionyl-tRNA(fMet); mRNA recruitment can occur at any time during PIC assembly.

The protein localises to the cytoplasm. In terms of biological role, one of the essential components for the initiation of protein synthesis. Stabilizes the binding of IF-2 and IF-3 on the 30S subunit to which N-formylmethionyl-tRNA(fMet) subsequently binds. Helps modulate mRNA selection, yielding the 30S pre-initiation complex (PIC). Upon addition of the 50S ribosomal subunit IF-1, IF-2 and IF-3 are released leaving the mature 70S translation initiation complex. This chain is Translation initiation factor IF-1, found in Mycoplasma pneumoniae (strain ATCC 29342 / M129 / Subtype 1) (Mycoplasmoides pneumoniae).